A 247-amino-acid polypeptide reads, in one-letter code: ATP synthase subunit a, chloroplastic (247 aa).

A run of 5 helical transmembrane segments spans residues 36 to 56, 95 to 115, 134 to 154, 199 to 219, and 220 to 240; these read GQVL…SIFG, VPFI…GALV, INTT…AGFS, LVVG…LMLL, and GLFT…AYIG.

It belongs to the ATPase A chain family. F-type ATPases have 2 components, CF(1) - the catalytic core - and CF(0) - the membrane proton channel. CF(1) has five subunits: alpha(3), beta(3), gamma(1), delta(1), epsilon(1). CF(0) has four main subunits: a, b, b' and c.

It localises to the plastid. The protein localises to the chloroplast thylakoid membrane. Functionally, key component of the proton channel; it plays a direct role in the translocation of protons across the membrane. The protein is ATP synthase subunit a, chloroplastic of Mesostigma viride (Green alga).